The following is a 632-amino-acid chain: tRNA uridine 5-carboxymethylaminomethyl modification enzyme MnmG (632 aa).

Residues 13–18, Val125, and Ser180 each bind FAD; that span reads GGGHAG. Residue 273-287 participates in NAD(+) binding; that stretch reads GPRYCPSIEDKVMRF. FAD is bound at residue Gln370.

This sequence belongs to the MnmG family. As to quaternary structure, homodimer. Heterotetramer of two MnmE and two MnmG subunits. FAD is required as a cofactor.

Its subcellular location is the cytoplasm. NAD-binding protein involved in the addition of a carboxymethylaminomethyl (cmnm) group at the wobble position (U34) of certain tRNAs, forming tRNA-cmnm(5)s(2)U34. The sequence is that of tRNA uridine 5-carboxymethylaminomethyl modification enzyme MnmG from Vibrio vulnificus (strain YJ016).